We begin with the raw amino-acid sequence, 320 residues long: Citrate synthase (320 aa).

Active-site residues include H249 and D307.

The protein belongs to the citrate synthase family.

The catalysed reaction is oxaloacetate + acetyl-CoA + H2O = citrate + CoA + H(+). The protein operates within carbohydrate metabolism; tricarboxylic acid cycle; isocitrate from oxaloacetate: step 1/2. In Bartonella doshiae, this protein is Citrate synthase (gltA).